The following is a 156-amino-acid chain: Small ribosomal subunit protein uS7c (156 aa).

This sequence belongs to the universal ribosomal protein uS7 family. In terms of assembly, part of the 30S ribosomal subunit.

It localises to the plastid. The protein resides in the chloroplast. Its function is as follows. One of the primary rRNA binding proteins, it binds directly to 16S rRNA where it nucleates assembly of the head domain of the 30S subunit. In Rhodomonas salina (Cryptomonas salina), this protein is Small ribosomal subunit protein uS7c (rps7).